Here is a 21-residue protein sequence, read N- to C-terminus: Fibrinogen beta chain (21 aa).

The residue at position 1 (Q1) is a Pyrrolidone carboxylic acid. Over residues 1–11 the composition is skewed to acidic residues; sequence QFPTDYDEGED. Residues 1 to 21 are disordered; the sequence is QFPTDYDEGEDDRPKSGLGAR. O-linked (GalNAc...) threonine glycosylation is present at T4. Position 6 is a sulfotyrosine (Y6).

Heterohexamer; disulfide linked. Contains 2 sets of 3 non-identical chains (alpha, beta and gamma). The 2 heterotrimers are in head to head conformation with the N-termini in a small central domain. In terms of processing, conversion of fibrinogen to fibrin is triggered by thrombin, which cleaves fibrinopeptides A and B from alpha and beta chains, and thus exposes the N-terminal polymerization sites responsible for the formation of the soft clot.

The protein resides in the secreted. Cleaved by the protease thrombin to yield monomers which, together with fibrinogen alpha (FGA) and fibrinogen gamma (FGG), polymerize to form an insoluble fibrin matrix. Fibrin has a major function in hemostasis as one of the primary components of blood clots. In addition, functions during the early stages of wound repair to stabilize the lesion and guide cell migration during re-epithelialization. Was originally thought to be essential for platelet aggregation, based on in vitro studies using anticoagulated blood. However subsequent studies have shown that it is not absolutely required for thrombus formation in vivo. Enhances expression of SELP in activated platelets. Maternal fibrinogen is essential for successful pregnancy. Fibrin deposition is also associated with infection, where it protects against IFNG-mediated hemorrhage. May also facilitate the antibacterial immune response via both innate and T-cell mediated pathways. This is Fibrinogen beta chain (FGB) from Syncerus caffer (African buffalo).